A 130-amino-acid chain; its full sequence is Large ribosomal subunit protein bL19 (130 aa).

It belongs to the bacterial ribosomal protein bL19 family.

This protein is located at the 30S-50S ribosomal subunit interface and may play a role in the structure and function of the aminoacyl-tRNA binding site. This chain is Large ribosomal subunit protein bL19, found in Burkholderia lata (strain ATCC 17760 / DSM 23089 / LMG 22485 / NCIMB 9086 / R18194 / 383).